The following is an 880-amino-acid chain: MKIEEVKVYNFRSHEETVVRFRKGINLIIGQNGSGKSSLLDAILVGLYWSKKLRLRGLKKDEFRRIGGKGGTRIEIKFENDDSKYVLFRDFSRNVAYLKVQENGKWRHASEPSMESVSSYIERILPYNVFLNAIYIRQGQIDAILESDETRDKVVREILNLDKLESAYENLKRIKTNINLLIESKKSFIARTENIEELIKANEDELTKKLSEINEISSKLPPIRGELEKVRENVKELESIKGKISELKIQVEKLKGRKKGLEEKIVQIERSIEEKKAKISELEEIVKDIPKLQEKEKEYRKLKGFRDEYESKLRRLEKELSKWESELKAIEEVIKEGEKKKERAEEIREKLSEIEKRLEELKPYVEELEDAKQVQKQIERLKARLKGLSPGEVIEKLESLEKERTEIEEAIKEITTRIGQMEQEKNERMKAIEELRKAKGKCPVCGRELTEEHKKELMERYTLEIKKIEEELKRTTEEERKLRVNLRKLEIKLREFSVMRDIAEQIKELESKLKGFNLEELEQKEREFEGLNEEFNKLKGELLGLERDLKRIKALEGRRKLIEEKVRKAKEELENLHRQLRELGFESVEELNLRIQELEEFHDKYVEAKKSESELRELKNKLEKEKTELDQAFEMLADVENEIEEKEAKLKDLESKFNEEEYEEKRERLVKLEREVSSLTARLEELKKSVEQIKATLRKLKEEKEEREKAKLEIKKLEKALSKVEDLRKKIKDYKTLAKEQALNRISEIASEIFSEFTDGKYSNVIVRAEENKTKLFVVYEGKEVPLTFLSGGERIALGLAFRLALSMYLVGRIDLLILDEPTPFLDEERRRKLLDIMERHLRRISQVIMVSHDEELKDAADYVIRLRLEGGKSKVEVVS.

ATP is bound by residues Arg-12, Asn-32–Ser-38, and Gln-138. Coiled-coil stretches lie at residues Gly-225–Glu-336 and Gly-391–Asn-744. The Zinc-hook domain occupies Leu-397 to Arg-494. Residues Cys-442 and Cys-445 each contribute to the Zn(2+) site. Phe-789–Glu-794 is a binding site for ATP.

It belongs to the SMC family. RAD50 subfamily. As to quaternary structure, homodimer. Forms a heterotetramer composed of two Mre11 subunits and two Rad50 subunits. The cofactor is Zn(2+).

Part of the Rad50/Mre11 complex, which is involved in the early steps of DNA double-strand break (DSB) repair. The complex may facilitate opening of the processed DNA ends to aid in the recruitment of HerA and NurA. Rad50 controls the balance between DNA end bridging and DNA resection via ATP-dependent structural rearrangements of the Rad50/Mre11 complex. The protein is DNA double-strand break repair Rad50 ATPase of Pyrococcus abyssi (strain GE5 / Orsay).